A 437-amino-acid chain; its full sequence is MKKTHITEQKFADLGLQPQVTEGLEKKGFEYCTPIQALALPVLLTGQDIAGQAQTGTGKTLAFLTATFNHLLTTPEHEGRQPTQPRAIIMAPTRELAIQIFNDAEPLIASTGLKAALAYGGESYDKQLAKLQDGVDILIGTTGRIIDFYKQRVFNLNNIQAVVLDEADRMFDLGFIKDIRFLFRRMPEPKERLNMLFSATLSYRVQELAFEHMHNPEHVVVEPAQKTGHRIQEELFYPSNEDKMALLQTLIEEEWPDRAIVFANTKHKCESVWGHLAADGHRVGLLTGDVPQKKREKILEQFTKGDVDILVATDVAARGLHIPQVTHVFNYDLPDDCEDYVHRIGRTGRAGASGHSISFACEEYAINLPAIEEYIEHTIPVSEYDASALIQDLPAPIRMRAPRVQQRRTNTGGTRSGNRKPQGRRPRQPRQSAPKQS.

Positions 9–37 (QKFADLGLQPQVTEGLEKKGFEYCTPIQA) match the Q motif motif. One can recognise a Helicase ATP-binding domain in the interval 40–219 (LPVLLTGQDI…FEHMHNPEHV (180 aa)). An ATP-binding site is contributed by 53 to 60 (AQTGTGKT). The short motif at 165–168 (DEAD) is the DEAD box element. Positions 245-390 (ALLQTLIEEE…VSEYDASALI (146 aa)) constitute a Helicase C-terminal domain. The segment at 397–437 (IRMRAPRVQQRRTNTGGTRSGNRKPQGRRPRQPRQSAPKQS) is disordered. A compositionally biased stretch (basic residues) spans 417–428 (GNRKPQGRRPRQ).

It belongs to the DEAD box helicase family. RhlB subfamily. In terms of assembly, component of the RNA degradosome, which is a multiprotein complex involved in RNA processing and mRNA degradation.

The protein resides in the cytoplasm. It catalyses the reaction ATP + H2O = ADP + phosphate + H(+). Functionally, DEAD-box RNA helicase involved in RNA degradation. Has RNA-dependent ATPase activity and unwinds double-stranded RNA. This chain is ATP-dependent RNA helicase RhlB, found in Vibrio parahaemolyticus serotype O3:K6 (strain RIMD 2210633).